The sequence spans 357 residues: Nicotinate-nucleotide--dimethylbenzimidazole phosphoribosyltransferase (357 aa).

E323 functions as the Proton acceptor in the catalytic mechanism.

This sequence belongs to the CobT family.

The enzyme catalyses 5,6-dimethylbenzimidazole + nicotinate beta-D-ribonucleotide = alpha-ribazole 5'-phosphate + nicotinate + H(+). Its pathway is nucleoside biosynthesis; alpha-ribazole biosynthesis; alpha-ribazole from 5,6-dimethylbenzimidazole: step 1/2. In terms of biological role, catalyzes the synthesis of alpha-ribazole-5'-phosphate from nicotinate mononucleotide (NAMN) and 5,6-dimethylbenzimidazole (DMB). The polypeptide is Nicotinate-nucleotide--dimethylbenzimidazole phosphoribosyltransferase (Nitratidesulfovibrio vulgaris (strain DP4) (Desulfovibrio vulgaris)).